Here is a 334-residue protein sequence, read N- to C-terminus: L-lactate dehydrogenase A chain (334 aa).

Residues Gly-30 to Lys-58 and Arg-100 each bind NAD(+). 3 residues coordinate substrate: Arg-107, Asn-139, and Arg-170. An NAD(+)-binding site is contributed by Asn-139. The active-site Proton acceptor is His-194. Thr-249 lines the substrate pocket.

The protein belongs to the LDH/MDH superfamily. LDH family. In terms of assembly, homotetramer.

It is found in the cytoplasm. It carries out the reaction (S)-lactate + NAD(+) = pyruvate + NADH + H(+). Its pathway is fermentation; pyruvate fermentation to lactate; (S)-lactate from pyruvate: step 1/1. In terms of biological role, interconverts simultaneously and stereospecifically pyruvate and lactate with concomitant interconversion of NADH and NAD(+). This chain is L-lactate dehydrogenase A chain (ldha), found in Xenopus laevis (African clawed frog).